We begin with the raw amino-acid sequence, 306 residues long: Mediator of RNA polymerase II transcription subunit 30 (306 aa).

2 disordered regions span residues 1 to 22 and 51 to 148; these read MSGQYPSGYQSPSGHRGNFNSP and QQQM…STQA. A compositionally biased stretch (low complexity) spans 51–128; it reads QQQMQSGGVQ…VSSAAQSATG (78 aa).

It belongs to the Mediator complex subunit 30 family. In terms of assembly, component of the Mediator complex.

It localises to the nucleus. Its function is as follows. Component of the Mediator complex, a coactivator involved in the regulated transcription of nearly all RNA polymerase II-dependent genes. Mediator functions as a bridge to convey information from gene-specific regulatory proteins to the basal RNA polymerase II transcription machinery. Mediator is recruited to promoters by direct interactions with regulatory proteins and serves as a scaffold for the assembly of a functional preinitiation complex with RNA polymerase II and the general transcription factors. This chain is Mediator of RNA polymerase II transcription subunit 30 (MED30), found in Aedes aegypti (Yellowfever mosquito).